A 391-amino-acid polypeptide reads, in one-letter code: MDQFIKQDETGDLIETGMNVANHFLSAPIQGTNSLSKASIIPGVAPVLIGNPEQKNIQHPTASHQGSKSKGSGSGVRSIIVPPSEAGNGGTQDPEPLFAQTGQGGIVTTVYQDPTIQPTGSSRSVELAKIGKERMINRFVEKPRISTPVTEFKRGGPGAAAQGQTIQEEGIDGNGASAGSKERSGSLSGATLYAHLSLPQQDSTPANVGIAPQSAISANEIMDLLRGMDARLQHLEQKVDKVLAQGSMVTQIKNELSTVKTTLATIEGMMATVKIMDPGNPTGVPVDELRRSFSDHVTIVSGPGDVPFSSSEEPTLYLDELARPVSKPRPAKQTKPQPVKDLAGRKVMITKMITDCVANPQMKQAFEQRLAKASTEDALNDIKRDIIRSAI.

2 positions are modified to phosphothreonine: T10 and T16. Residues 54 to 65 show a composition bias toward polar residues; the sequence is QKNIQHPTASHQ. Disordered regions lie at residues 54 to 97 and 148 to 185; these read QKNI…PEPL and PVTE…ERSG. S69 is modified (phosphoserine). Residues T91, T150, and T165 each carry the phosphothreonine modification. The residue at position 188 (S188) is a Phosphoserine. The segment at 216–279 is multimerization; it reads ISANEIMDLL…MATVKIMDPG (64 aa). Positions 218 to 245 form a coiled coil; that stretch reads ANEIMDLLRGMDARLQHLEQKVDKVLAQ. Phosphothreonine is present on T250. At S257 the chain carries Phosphoserine. Phosphothreonine is present on residues T258 and T282. Residues S292 and S294 each carry the phosphoserine modification. A Phosphothreonine modification is found at T298. Residues S301 and S374 each carry the phosphoserine modification. The segment at 343-391 is interaction with the nucleoprotein; sequence AGRKVMITKMITDCVANPQMKQAFEQRLAKASTEDALNDIKRDIIRSAI. Residue T375 is modified to Phosphothreonine.

Belongs to the rubulavirus/avulavirus P protein family. As to quaternary structure, homotetramer. Interacts (via multimerization domain) with polymerase L; this interaction forms the polymerase L-P complex. Interacts (via N-terminus) with N0 (via Ncore); this interaction allows P to chaperon N0 to avoid N polymerization before encapsidation. Interacts (via C-terminus) with N-RNA template; this interaction positions the polymerase on the template for both transcription and replication. Interacts with host RPS6KB1 kinase; this interaction may play a role in the viral replication and transcription.

Essential cofactor of the RNA polymerase L that plays a central role in the transcription and replication by forming the polymerase complex with RNA polymerase L and recruiting L to the genomic N-RNA template for RNA synthesis. Also plays a central role in the encapsidation of nascent RNA chains by forming the encapsidation complex with the nucleocapsid protein N (N-P complex). Acts as a chaperone for newly synthesized free N protein, so-called N0, allowing encapsidation of nascent RNA chains during replication. The nucleoprotein protein N prevents excessive phosphorylation of P, which leads to down-regulation of viral transcription/ replication. Participates, together with N, in the formation of viral factories (viroplasms), which are large inclusions in the host cytoplasm where replication takes place. In Homo sapiens (Human), this protein is Phosphoprotein (P/V).